The primary structure comprises 321 residues: G-protein coupled receptor homolog ECRF3 (321 aa).

Over 1–34 (MEVKLDFSSEDFSNYSYNYSGDIYYGDVAPCVVN) the chain is Extracellular. Asparagine 14 and asparagine 18 each carry an N-linked (GlcNAc...) asparagine; by host glycan. A helical transmembrane segment spans residues 35–51 (FLISESALAFIYVLMFL). Over 52 to 76 (CNAIGNSLVLRTFLKYRAQAQSFDY) the chain is Cytoplasmic. The helical transmembrane segment at 77-93 (LMMGFCLNSLFLAGYLL) threads the bilayer. Over 94-124 (MRLLRMFEIFMNTELCKLEAFFLNLSIYWSP) the chain is Extracellular. N-linked (GlcNAc...) asparagine; by host glycosylation occurs at asparagine 117. A helical membrane pass occupies residues 125–141 (FILVFISVLRCLLIFCA). Residues 142 to 149 (TRLWVKKT) lie on the Cytoplasmic side of the membrane. Residues 150–166 (LIGQVFLCCSFVLACFG) form a helical membrane-spanning segment. The Extracellular segment spans residues 167-196 (ALPHVMVTSYYEPSSCIEEDGVLTEQLRTK). The chain crosses the membrane as a helical span at residues 197-215 (LNTFHTWYSFAGPLFITVI). At 216–234 (CYSMSCYKLFKTKLSKRAE) the chain is on the cytoplasmic side. A helical transmembrane segment spans residues 235-251 (VVTIITMTTLLFIVFCI). Topologically, residues 252-286 (PYYIMESIDTLLRVGVIEETCAKRSAIVYGIQCTY) are extracellular. The chain crosses the membrane as a helical span at residues 287 to 303 (MLLVLYYCMLPLMFAMF). Residues 304–321 (GSLFRQRMAAWCKTICHC) are Cytoplasmic-facing.

The protein belongs to the G-protein coupled receptor 1 family.

It is found in the host cell membrane. Its function is as follows. May be highly relevant to the process of cellular transformation and rapid T-cell proliferation effected by HVS during latent infections of T-cells in susceptible hosts. The protein is G-protein coupled receptor homolog ECRF3 (74) of Saimiri sciureus (Common squirrel monkey).